Consider the following 360-residue polypeptide: Phospho-N-acetylmuramoyl-pentapeptide-transferase (360 aa).

Transmembrane regions (helical) follow at residues Val18–Leu38, Thr73–Leu93, Tyr97–Tyr117, Tyr134–Leu154, Val168–Ser188, Gly199–Ser219, Ala236–Phe256, Val263–Leu283, Ile288–Val308, and Val338–Lys358.

The protein belongs to the glycosyltransferase 4 family. MraY subfamily. Requires Mg(2+) as cofactor.

It localises to the cell inner membrane. The enzyme catalyses UDP-N-acetyl-alpha-D-muramoyl-L-alanyl-gamma-D-glutamyl-meso-2,6-diaminopimeloyl-D-alanyl-D-alanine + di-trans,octa-cis-undecaprenyl phosphate = di-trans,octa-cis-undecaprenyl diphospho-N-acetyl-alpha-D-muramoyl-L-alanyl-D-glutamyl-meso-2,6-diaminopimeloyl-D-alanyl-D-alanine + UMP. It participates in cell wall biogenesis; peptidoglycan biosynthesis. Functionally, catalyzes the initial step of the lipid cycle reactions in the biosynthesis of the cell wall peptidoglycan: transfers peptidoglycan precursor phospho-MurNAc-pentapeptide from UDP-MurNAc-pentapeptide onto the lipid carrier undecaprenyl phosphate, yielding undecaprenyl-pyrophosphoryl-MurNAc-pentapeptide, known as lipid I. The protein is Phospho-N-acetylmuramoyl-pentapeptide-transferase of Shewanella denitrificans (strain OS217 / ATCC BAA-1090 / DSM 15013).